The sequence spans 175 residues: PE-PGRS family protein PE_PGRS8 (175 aa).

One can recognise a PE domain in the interval 1–93; sequence MSFVIAAPEA…AGSYAAAEAA (93 aa).

This sequence belongs to the mycobacterial PE family. PGRS subfamily.

The protein resides in the secreted. It is found in the cell wall. Its subcellular location is the cell surface. The protein is PE-PGRS family protein PE_PGRS8 of Mycobacterium tuberculosis (strain ATCC 25618 / H37Rv).